The sequence spans 384 residues: WD repeat-containing protein 74 (384 aa).

WD repeat units lie at residues 40 to 80, 83 to 122, 128 to 168, 179 to 220, 224 to 266, and 267 to 306; these read RREE…FLSQ, CPGG…ASSD, KVGP…EPVF, DLRV…RRPV, TYGE…GCLK, and GLAG…GLEH. At Ser-214 the chain carries Phosphoserine. Lys-311 carries the post-translational modification N6-methyllysine. The tract at residues 320–384 is required for nucleolar and nuclear location; that stretch reads SGRDNWEDEP…KKKRPGSTSP (65 aa). The interval 323–384 is disordered; the sequence is DNWEDEPQEP…KKKRPGSTSP (62 aa). Positions 371–384 are enriched in basic residues; that stretch reads QRRKKKKRPGSTSP.

Isoform 1 interacts (through WDR repeats) with NVL; the interaction is independent of RNA or pre-60S ribosome particles. Isoform 2 does not interact with NVL. Interacts with MTREX; the interaction dissociation in a late stage of rRNA synthesis is required for appropriate maturation of pre-60S particles and depends on the ATPase activity of NVL.

It localises to the nucleus. It is found in the nucleolus. Functionally, regulatory protein of the MTREX-exosome complex involved in the synthesis of the 60S ribosomal subunit. Participates in an early cleavage of the pre-rRNA processing pathway in cooperation with NVL. Required for blastocyst formation, is necessary for RNA transcription, processing and/or stability during preimplantation development. In Mus musculus (Mouse), this protein is WD repeat-containing protein 74 (Wdr74).